The following is a 496-amino-acid chain: ATP synthase subunit beta, chloroplastic (496 aa).

170–177 (GGAGVGKT) provides a ligand contact to ATP.

The protein belongs to the ATPase alpha/beta chains family. F-type ATPases have 2 components, CF(1) - the catalytic core - and CF(0) - the membrane proton channel. CF(1) has five subunits: alpha(3), beta(3), gamma(1), delta(1), epsilon(1). CF(0) has four main subunits: a(1), b(1), b'(1) and c(9-12).

It localises to the plastid. Its subcellular location is the chloroplast thylakoid membrane. It catalyses the reaction ATP + H2O + 4 H(+)(in) = ADP + phosphate + 5 H(+)(out). Its function is as follows. Produces ATP from ADP in the presence of a proton gradient across the membrane. The catalytic sites are hosted primarily by the beta subunits. The chain is ATP synthase subunit beta, chloroplastic from Trachycarpus fortunei (Chinese windmill palm).